The following is a 260-amino-acid chain: ATP synthase subunit a (260 aa).

Helical transmembrane passes span 27–47, 90–110, 132–154, 208–228, and 230–250; these read FWTV…LFIW, IAPL…MDLI, SADV…YYSI, LIFI…LSVP, and AIFH…LTIV.

It belongs to the ATPase A chain family. F-type ATPases have 2 components, CF(1) - the catalytic core - and CF(0) - the membrane proton channel. CF(1) has five subunits: alpha(3), beta(3), gamma(1), delta(1), epsilon(1). CF(0) has three main subunits: a(1), b(2) and c(9-12). The alpha and beta chains form an alternating ring which encloses part of the gamma chain. CF(1) is attached to CF(0) by a central stalk formed by the gamma and epsilon chains, while a peripheral stalk is formed by the delta and b chains.

It is found in the cell inner membrane. Its function is as follows. Key component of the proton channel; it plays a direct role in the translocation of protons across the membrane. This is ATP synthase subunit a from Aeromonas hydrophila subsp. hydrophila (strain ATCC 7966 / DSM 30187 / BCRC 13018 / CCUG 14551 / JCM 1027 / KCTC 2358 / NCIMB 9240 / NCTC 8049).